The primary structure comprises 85 residues: SKP1-like protein 6 (85 aa).

An interaction with the F-box domain of F-box proteins region spans residues 65 to 85; sequence MMAANYLNIQSLLDLTFSNCR.

It belongs to the SKP1 family. As to quaternary structure, part of a SCF (SKP1-cullin-F-box) protein ligase complex.

Its subcellular location is the nucleus. Its pathway is protein modification; protein ubiquitination. In terms of biological role, involved in ubiquitination and subsequent proteasomal degradation of target proteins. Together with CUL1, RBX1 and a F-box protein, it forms a SCF E3 ubiquitin ligase complex. The functional specificity of this complex depends on the type of F-box protein. In the SCF complex, it serves as an adapter that links the F-box protein to CUL1. This is SKP1-like protein 6 (ASK6) from Arabidopsis thaliana (Mouse-ear cress).